Consider the following 732-residue polypeptide: Serine/threonine-protein kinase CBK1 (732 aa).

Positions 111-240 (SFDNHLNVDP…STEAANSDMT (130 aa)) are disordered. A compositionally biased stretch (polar residues) spans 119–159 (DPNNTERFTSMDSMNFQPPASTFTQLGNGSSTNLSEISSGQ). A compositionally biased stretch (low complexity) spans 160–171 (NSLLSNHSVNNL). Polar residues predominate over residues 172–183 (PTALTSDTSPPV). Low complexity predominate over residues 185–221 (QHPQFQPQQQQQQQQPQQQQIFQQQQQQQQQQQQPQQ). Polar residues predominate over residues 222–240 (SRAVVNQSVSTEAANSDMT). Residues 281-310 (HAIERNQRRLELENKIANEDIGSSEERKNR) adopt a coiled-coil conformation. Residues 335–647 (FHTVKVIGKG…AEEIKQHPFF (313 aa)) form the Protein kinase domain. ATP-binding positions include 341–349 (IGKGAFGEV) and K364. D458 acts as the Proton acceptor in catalysis. An AGC-kinase C-terminal domain is found at 648–730 (RGVDWDSIRD…SRFDYLTRKN (83 aa)).

The protein belongs to the protein kinase superfamily. STE Ser/Thr protein kinase family. COT1 subfamily. In terms of assembly, interacts with MOB2 and BCR1.

The protein localises to the bud neck. It is found in the cell tip. The enzyme catalyses L-seryl-[protein] + ATP = O-phospho-L-seryl-[protein] + ADP + H(+). The catalysed reaction is L-threonyl-[protein] + ATP = O-phospho-L-threonyl-[protein] + ADP + H(+). Its function is as follows. Serine/threonine-protein kinase required for wild-type hyphal growth and transcriptional regulation of cell-wall-associated genes. Involved in the biofilm formation through phosphorylation of the master regulator of biofilm formation BCR1. This Candida albicans (strain SC5314 / ATCC MYA-2876) (Yeast) protein is Serine/threonine-protein kinase CBK1 (CBK1).